We begin with the raw amino-acid sequence, 398 residues long: Phosphoglycerate kinase (398 aa).

Substrate contacts are provided by residues D20–N22, R35, H58–R61, R118, and R155. ATP is bound by residues K206, G295, E326, and G354–S357.

This sequence belongs to the phosphoglycerate kinase family. Monomer.

It localises to the cytoplasm. The catalysed reaction is (2R)-3-phosphoglycerate + ATP = (2R)-3-phospho-glyceroyl phosphate + ADP. Its pathway is carbohydrate degradation; glycolysis; pyruvate from D-glyceraldehyde 3-phosphate: step 2/5. This chain is Phosphoglycerate kinase, found in Onion yellows phytoplasma (strain OY-M).